The sequence spans 445 residues: Exodeoxyribonuclease 7 large subunit (445 aa).

This sequence belongs to the XseA family. As to quaternary structure, heterooligomer composed of large and small subunits.

It is found in the cytoplasm. The enzyme catalyses Exonucleolytic cleavage in either 5'- to 3'- or 3'- to 5'-direction to yield nucleoside 5'-phosphates.. Its function is as follows. Bidirectionally degrades single-stranded DNA into large acid-insoluble oligonucleotides, which are then degraded further into small acid-soluble oligonucleotides. This chain is Exodeoxyribonuclease 7 large subunit, found in Xanthomonas oryzae pv. oryzae (strain KACC10331 / KXO85).